Consider the following 66-residue polypeptide: Potassium channel toxin alpha-KTx (66 aa).

Residues 1–21 (MNTKVVLIMLMITSVILVVEA) form the signal peptide. 4 cysteine pairs are disulfide-bonded: Cys-29-Cys-49, Cys-35-Cys-59, Cys-39-Cys-61, and Cys-44-Cys-64.

Belongs to the short scorpion toxin superfamily. Potassium channel inhibitor family. As to expression, expressed by the venom gland.

It is found in the secreted. In terms of biological role, blocks voltage-gated potassium channels. This chain is Potassium channel toxin alpha-KTx, found in Hoffmannihadrurus gertschi (Scorpion).